The following is a 366-amino-acid chain: Carbamoyl phosphate synthase small chain (366 aa).

Residues 1-171 (MLERRYLVLE…KTPYVSTGSD (171 aa)) are CPSase. L-glutamine-binding residues include Ser-47, Gly-221, and Gly-223. A Glutamine amidotransferase type-1 domain is found at 173–360 (SVVLLDFGKK…MTMMKEFKEK (188 aa)). The active-site Nucleophile is Cys-248. L-glutamine contacts are provided by Leu-249, Gln-252, Asn-290, Gly-292, and Tyr-293. Catalysis depends on residues His-333 and Glu-335.

This sequence belongs to the CarA family. Composed of two chains; the small (or glutamine) chain promotes the hydrolysis of glutamine to ammonia, which is used by the large (or ammonia) chain to synthesize carbamoyl phosphate. Tetramer of heterodimers (alpha,beta)4.

It catalyses the reaction hydrogencarbonate + L-glutamine + 2 ATP + H2O = carbamoyl phosphate + L-glutamate + 2 ADP + phosphate + 2 H(+). The enzyme catalyses L-glutamine + H2O = L-glutamate + NH4(+). It functions in the pathway amino-acid biosynthesis; L-arginine biosynthesis; carbamoyl phosphate from bicarbonate: step 1/1. It participates in pyrimidine metabolism; UMP biosynthesis via de novo pathway; (S)-dihydroorotate from bicarbonate: step 1/3. Functionally, small subunit of the glutamine-dependent carbamoyl phosphate synthetase (CPSase). CPSase catalyzes the formation of carbamoyl phosphate from the ammonia moiety of glutamine, carbonate, and phosphate donated by ATP, constituting the first step of 2 biosynthetic pathways, one leading to arginine and/or urea and the other to pyrimidine nucleotides. The small subunit (glutamine amidotransferase) binds and cleaves glutamine to supply the large subunit with the substrate ammonia. This is Carbamoyl phosphate synthase small chain from Staphylococcus haemolyticus (strain JCSC1435).